The chain runs to 244 residues: 5-oxoprolinase subunit A (244 aa).

The protein belongs to the LamB/PxpA family. In terms of assembly, forms a complex composed of PxpA, PxpB and PxpC.

The catalysed reaction is 5-oxo-L-proline + ATP + 2 H2O = L-glutamate + ADP + phosphate + H(+). Catalyzes the cleavage of 5-oxoproline to form L-glutamate coupled to the hydrolysis of ATP to ADP and inorganic phosphate. In Escherichia coli O157:H7, this protein is 5-oxoprolinase subunit A.